The chain runs to 130 residues: Small ribosomal subunit protein bS16 (130 aa).

A disordered region spans residues 80–130 (AGHTPKKERANMKKAQPGKKAVERAEEKAAKASAAAEAPAEAPAAEAAAEE). Basic and acidic residues predominate over residues 99–109 (KAVERAEEKAA). Residues 110–130 (KASAAAEAPAEAPAAEAAAEE) are compositionally biased toward low complexity.

It belongs to the bacterial ribosomal protein bS16 family.

The polypeptide is Small ribosomal subunit protein bS16 (Jannaschia sp. (strain CCS1)).